The chain runs to 197 residues: 7-methyl-GTP pyrophosphatase (197 aa).

Asp-69 (proton acceptor) is an active-site residue.

This sequence belongs to the Maf family. YceF subfamily. A divalent metal cation is required as a cofactor.

The protein localises to the cytoplasm. The catalysed reaction is N(7)-methyl-GTP + H2O = N(7)-methyl-GMP + diphosphate + H(+). Nucleoside triphosphate pyrophosphatase that hydrolyzes 7-methyl-GTP (m(7)GTP). May have a dual role in cell division arrest and in preventing the incorporation of modified nucleotides into cellular nucleic acids. The sequence is that of 7-methyl-GTP pyrophosphatase from Syntrophotalea carbinolica (strain DSM 2380 / NBRC 103641 / GraBd1) (Pelobacter carbinolicus).